A 147-amino-acid chain; its full sequence is Large ribosomal subunit protein uL13 (147 aa).

This sequence belongs to the universal ribosomal protein uL13 family. In terms of assembly, part of the 50S ribosomal subunit.

In terms of biological role, this protein is one of the early assembly proteins of the 50S ribosomal subunit, although it is not seen to bind rRNA by itself. It is important during the early stages of 50S assembly. The sequence is that of Large ribosomal subunit protein uL13 from Lactobacillus delbrueckii subsp. bulgaricus (strain ATCC 11842 / DSM 20081 / BCRC 10696 / JCM 1002 / NBRC 13953 / NCIMB 11778 / NCTC 12712 / WDCM 00102 / Lb 14).